Consider the following 67-residue polypeptide: ATP synthase F(0) complex subunit 8 (67 aa).

The chain crosses the membrane as a helical span at residues 8–24; the sequence is TWFITIISSMATLFILF. An N6-acetyllysine; alternate modification is found at lysine 54. Lysine 54 bears the N6-succinyllysine; alternate mark. The residue at position 57 (lysine 57) is an N6-acetyllysine.

Belongs to the ATPase protein 8 family. Component of the ATP synthase complex composed at least of ATP5F1A/subunit alpha, ATP5F1B/subunit beta, ATP5MC1/subunit c (homooctomer), MT-ATP6/subunit a, MT-ATP8/subunit 8, ATP5ME/subunit e, ATP5MF/subunit f, ATP5MG/subunit g, ATP5MK/subunit k, ATP5MJ/subunit j, ATP5F1C/subunit gamma, ATP5F1D/subunit delta, ATP5F1E/subunit epsilon, ATP5PF/subunit F6, ATP5PB/subunit b, ATP5PD/subunit d, ATP5PO/subunit OSCP. ATP synthase complex consists of a soluble F(1) head domain (subunits alpha(3) and beta(3)) - the catalytic core - and a membrane F(0) domain - the membrane proton channel (subunits c, a, 8, e, f, g, k and j). These two domains are linked by a central stalk (subunits gamma, delta, and epsilon) rotating inside the F1 region and a stationary peripheral stalk (subunits F6, b, d, and OSCP). Interacts with PRICKLE3.

The protein localises to the mitochondrion membrane. Subunit 8, of the mitochondrial membrane ATP synthase complex (F(1)F(0) ATP synthase or Complex V) that produces ATP from ADP in the presence of a proton gradient across the membrane which is generated by electron transport complexes of the respiratory chain. ATP synthase complex consist of a soluble F(1) head domain - the catalytic core - and a membrane F(1) domain - the membrane proton channel. These two domains are linked by a central stalk rotating inside the F(1) region and a stationary peripheral stalk. During catalysis, ATP synthesis in the catalytic domain of F(1) is coupled via a rotary mechanism of the central stalk subunits to proton translocation. In vivo, can only synthesize ATP although its ATP hydrolase activity can be activated artificially in vitro. Part of the complex F(0) domain. This is ATP synthase F(0) complex subunit 8 from Rattus norvegicus (Rat).